The sequence spans 187 residues: Elongation factor P (187 aa).

It belongs to the elongation factor P family.

The protein localises to the cytoplasm. Its pathway is protein biosynthesis; polypeptide chain elongation. Involved in peptide bond synthesis. Stimulates efficient translation and peptide-bond synthesis on native or reconstituted 70S ribosomes in vitro. Probably functions indirectly by altering the affinity of the ribosome for aminoacyl-tRNA, thus increasing their reactivity as acceptors for peptidyl transferase. The chain is Elongation factor P from Jannaschia sp. (strain CCS1).